We begin with the raw amino-acid sequence, 352 residues long: Protein RecA (352 aa).

66-73 (GPESSGKT) provides a ligand contact to ATP. The disordered stretch occupies residues 330–352 (TKDDSKVATVDKANEEQAAEPVQ).

The protein belongs to the RecA family.

It localises to the cytoplasm. Can catalyze the hydrolysis of ATP in the presence of single-stranded DNA, the ATP-dependent uptake of single-stranded DNA by duplex DNA, and the ATP-dependent hybridization of homologous single-stranded DNAs. It interacts with LexA causing its activation and leading to its autocatalytic cleavage. The sequence is that of Protein RecA from Psychrobacter cryohalolentis (strain ATCC BAA-1226 / DSM 17306 / VKM B-2378 / K5).